The chain runs to 1153 residues: ATP-dependent helicase/deoxyribonuclease subunit B (1153 aa).

8-15 provides a ligand contact to ATP; the sequence is GRAGSGKS. Positions 786, 1104, 1107, and 1113 each coordinate [4Fe-4S] cluster.

Belongs to the helicase family. AddB/RexB type 1 subfamily. As to quaternary structure, heterodimer of AddA and AddB. The cofactor is Mg(2+). Requires [4Fe-4S] cluster as cofactor.

In terms of biological role, the heterodimer acts as both an ATP-dependent DNA helicase and an ATP-dependent, dual-direction single-stranded exonuclease. Recognizes the chi site generating a DNA molecule suitable for the initiation of homologous recombination. The AddB subunit has 5' -&gt; 3' nuclease activity but not helicase activity. This Clostridium acetobutylicum (strain ATCC 824 / DSM 792 / JCM 1419 / IAM 19013 / LMG 5710 / NBRC 13948 / NRRL B-527 / VKM B-1787 / 2291 / W) protein is ATP-dependent helicase/deoxyribonuclease subunit B.